The sequence spans 94 residues: Pyrimidine/purine nucleoside phosphorylase (94 aa).

The protein belongs to the nucleoside phosphorylase PpnP family.

The catalysed reaction is a purine D-ribonucleoside + phosphate = a purine nucleobase + alpha-D-ribose 1-phosphate. It catalyses the reaction adenosine + phosphate = alpha-D-ribose 1-phosphate + adenine. It carries out the reaction cytidine + phosphate = cytosine + alpha-D-ribose 1-phosphate. The enzyme catalyses guanosine + phosphate = alpha-D-ribose 1-phosphate + guanine. The catalysed reaction is inosine + phosphate = alpha-D-ribose 1-phosphate + hypoxanthine. It catalyses the reaction thymidine + phosphate = 2-deoxy-alpha-D-ribose 1-phosphate + thymine. It carries out the reaction uridine + phosphate = alpha-D-ribose 1-phosphate + uracil. The enzyme catalyses xanthosine + phosphate = alpha-D-ribose 1-phosphate + xanthine. Functionally, catalyzes the phosphorolysis of diverse nucleosides, yielding D-ribose 1-phosphate and the respective free bases. Can use uridine, adenosine, guanosine, cytidine, thymidine, inosine and xanthosine as substrates. Also catalyzes the reverse reactions. The polypeptide is Pyrimidine/purine nucleoside phosphorylase (Escherichia coli (strain ATCC 8739 / DSM 1576 / NBRC 3972 / NCIMB 8545 / WDCM 00012 / Crooks)).